We begin with the raw amino-acid sequence, 340 residues long: Uroporphyrinogen decarboxylase (340 aa).

Residues 23–27 (RQAGR), aspartate 72, tyrosine 147, threonine 202, and histidine 316 each bind substrate.

This sequence belongs to the uroporphyrinogen decarboxylase family. In terms of assembly, homodimer.

It is found in the cytoplasm. The catalysed reaction is uroporphyrinogen III + 4 H(+) = coproporphyrinogen III + 4 CO2. It functions in the pathway porphyrin-containing compound metabolism; protoporphyrin-IX biosynthesis; coproporphyrinogen-III from 5-aminolevulinate: step 4/4. Its function is as follows. Catalyzes the decarboxylation of four acetate groups of uroporphyrinogen-III to yield coproporphyrinogen-III. The chain is Uroporphyrinogen decarboxylase from Geobacter sulfurreducens (strain ATCC 51573 / DSM 12127 / PCA).